The following is a 405-amino-acid chain: uncharacterized protein (405 aa).

This is an uncharacterized protein from Equine herpesvirus 2 (strain 86/87) (EHV-2).